Consider the following 484-residue polypeptide: MSLSRAAIVDQLKEIVGADRVITDETVLKKNSIDRFRKFPDIHGIYTLPIPAAVVKLGSTEQVSRVLNFMNAHKINGVPRTGASATEGGLETVVENSVVLDGSAMNQIINIDIENMQATAQCGVPLEVLENALREKGYTTGHSPQSKPLAQMGGLVATRSIGQFSTLYGAIEDMVVGLEAVLADGTVTRIKNVPRRAAGPDIRHIIIGNEGALCYITEVTVKIFKFTPENNLFYGYILEDMKTGFNILREIMVEGYRPSIARLYDAEDGTQHFTHFADGKCVLIFMAEGNPRIAKVTGEGIAEIVARYPQCQRVDSKLIETWFNNLNWGPDKVAAERVQILKTGNMGFTTEVSGCWSCIHEIYESVINRIRTEFPHADDITMLGGHSSHSYQNGTNMYFVYDYNVVDCKPEEEIDKYHNPLNKIICEETIRLGGSMVHHHGIGKHRVHWSKLEHGSAWALLEGLKKQFDPNGIMNTGTIYPIEK.

Residues 47-226 (TLPIPAAVVK…TEVTVKIFKF (180 aa)) enclose the FAD-binding PCMH-type domain.

This sequence belongs to the FAD-binding oxidoreductase/transferase type 4 family.

This is an uncharacterized protein from Escherichia coli (strain K12).